A 198-amino-acid chain; its full sequence is Prostamide/prostaglandin F synthase (198 aa).

Phosphotyrosine is present on Y108.

This sequence belongs to the peroxiredoxin-like PRXL2 family. Prostamide/prostaglandin F synthase subfamily.

It localises to the cytoplasm. The protein resides in the cytosol. The catalysed reaction is prostaglandin H2 + [thioredoxin]-dithiol = prostaglandin F2alpha + [thioredoxin]-disulfide. It carries out the reaction prostamide F2alpha + [thioredoxin]-disulfide = prostamide H2 + [thioredoxin]-dithiol. Functionally, catalyzes the reduction of prostaglandin-ethanolamide H(2) (prostamide H(2)) to prostamide F(2alpha) with NADPH as proton donor. Also able to reduce prostaglandin H(2) to prostaglandin F(2alpha). In Pongo abelii (Sumatran orangutan), this protein is Prostamide/prostaglandin F synthase (PRXL2B).